A 719-amino-acid polypeptide reads, in one-letter code: Acyl-coenzyme A oxidase (719 aa).

The short motif at 716-719 is the Microbody targeting signal element; that stretch reads APKI.

This sequence belongs to the acyl-CoA oxidase family. It depends on FAD as a cofactor.

The protein resides in the peroxisome. It catalyses the reaction a 2,3-saturated acyl-CoA + O2 = a (2E)-enoyl-CoA + H2O2. Its pathway is lipid metabolism; peroxisomal fatty acid beta-oxidation. This is Acyl-coenzyme A oxidase (POX1) from Komagataella pastoris (Yeast).